We begin with the raw amino-acid sequence, 236 residues long: uncharacterized protein (236 aa).

In terms of domain architecture, HTH gntR-type spans 5–73 (QSTVENAKEK…DRKGWFVTQP (69 aa)). Positions 33 to 52 (ERELGELLGIKRMTLRQALL) form a DNA-binding region, H-T-H motif.

This is an uncharacterized protein from Escherichia coli O157:H7.